The primary structure comprises 148 residues: Cuticle protein CP1499 (148 aa).

Calcified shell.

This is Cuticle protein CP1499 from Cancer pagurus (Rock crab).